We begin with the raw amino-acid sequence, 323 residues long: ComG operon protein 2 (323 aa).

Transmembrane regions (helical) follow at residues 93 to 113 (YPLF…SIII), 143 to 163 (LVII…WLVF), and 296 to 316 (MIYG…LVPM).

Belongs to the GSP F family.

It localises to the cell membrane. Required for transformation and DNA binding. The polypeptide is ComG operon protein 2 (comGB) (Bacillus subtilis (strain 168)).